Consider the following 32-residue polypeptide: MIKKLTHATIWFLYSNYINYKLYLVLIIYQKS.

This is an uncharacterized protein from Mastigocladus laminosus (Fischerella sp.).